The following is a 278-amino-acid chain: Inosose isomerase (278 aa).

Residues glutamate 142, aspartate 174, histidine 200, and glutamate 246 each contribute to the a divalent metal cation site.

It belongs to the IolI family. Mn(2+) serves as cofactor. It depends on Fe(2+) as a cofactor. Requires Co(2+) as cofactor.

It carries out the reaction scyllo-inosose = scyllo-inosine. Its pathway is polyol metabolism; myo-inositol degradation into acetyl-CoA. In terms of biological role, involved in the reversible interconverion of 2-keto-myo-inositol (2KMI, inosose or 2,4,6/3,5-pentahydroxycyclohexanone) to 1-keto-D-chiro-inositol (1KDCI or 2,3,5/4,6-pentahydroxycyclohexanone). This chain is Inosose isomerase (iolI), found in Bacillus subtilis (strain 168).